The chain runs to 97 residues: Mitochondrial import inner membrane translocase subunit Tim8 A (97 aa).

Positions 43 to 66 match the Twin CX3C motif motif; it reads CWEKCMDKPGPKLDSRAEACFVNC. 2 disulfide bridges follow: Cys-43/Cys-66 and Cys-47/Cys-62. Phosphoserine occurs at positions 57, 87, 94, and 96.

The protein belongs to the small Tim family. Heterohexamer; composed of 3 copies of TIMM8A and 3 copies of TIMM13, named soluble 70 kDa complex. Associates with the TIM22 complex, whose core is composed of TIMM22.

Its subcellular location is the mitochondrion inner membrane. Its function is as follows. Mitochondrial intermembrane chaperone that participates in the import and insertion of some multi-pass transmembrane proteins into the mitochondrial inner membrane. Also required for the transfer of beta-barrel precursors from the TOM complex to the sorting and assembly machinery (SAM complex) of the outer membrane. Acts as a chaperone-like protein that protects the hydrophobic precursors from aggregation and guide them through the mitochondrial intermembrane space. The TIMM8-TIMM13 complex mediates the import of proteins such as TIMM23, SLC25A12/ARALAR1 and SLC25A13/ARALAR2, while the predominant TIMM9-TIMM10 70 kDa complex mediates the import of much more proteins. In Rattus norvegicus (Rat), this protein is Mitochondrial import inner membrane translocase subunit Tim8 A (Timm8a).